The sequence spans 471 residues: ATP synthase subunit beta (471 aa).

153–160 is a binding site for ATP; sequence GGAGVGKT.

The protein belongs to the ATPase alpha/beta chains family. F-type ATPases have 2 components, CF(1) - the catalytic core - and CF(0) - the membrane proton channel. CF(1) has five subunits: alpha(3), beta(3), gamma(1), delta(1), epsilon(1). CF(0) has four main subunits: a(1), b(1), b'(1) and c(9-12).

It localises to the cell membrane. The enzyme catalyses ATP + H2O + 4 H(+)(in) = ADP + phosphate + 5 H(+)(out). Functionally, produces ATP from ADP in the presence of a proton gradient across the membrane. The catalytic sites are hosted primarily by the beta subunits. This chain is ATP synthase subunit beta, found in Chloroflexus aggregans (strain MD-66 / DSM 9485).